The sequence spans 317 residues: Fe-S cluster assembly protein DRE2 (317 aa).

Positions 1-131 are N-terminal SAM-like domain; it reads MERMLFLSPP…KPNFGAQDTV (131 aa). The interval 132 to 209 is linker; the sequence is PLKLGKKKKA…EEALMDEEDM (78 aa). The [2Fe-2S] cluster site is built by C219, C230, C233, and C235. The tract at residues 219-235 is fe-S binding site A; it reads CRPKAGKRRRACKDCTC. Residues C280, C283, C291, and C294 each contribute to the [4Fe-4S] cluster site. 2 short sequence motifs (cx2C motif) span residues 280-283 and 291-294; these read CGNC and CDGC. The segment at 280 to 294 is fe-S binding site B; it reads CGNCALGDAFRCDGC.

The protein belongs to the anamorsin family. As to quaternary structure, monomer. Interacts with TAH18. Interacts with MIA40. Requires [2Fe-2S] cluster as cofactor. It depends on [4Fe-4S] cluster as a cofactor.

It localises to the cytoplasm. The protein resides in the mitochondrion intermembrane space. Functionally, component of the cytosolic iron-sulfur (Fe-S) protein assembly (CIA) machinery required for the maturation of extramitochondrial Fe-S proteins. Part of an electron transfer chain functioning in an early step of cytosolic Fe-S biogenesis, facilitating the de novo assembly of a [4Fe-4S] cluster on the scaffold complex CFD1-NBP35. Electrons are transferred to DRE2 from NADPH via the FAD- and FMN-containing protein TAH18. TAH18-DRE2 are also required for the assembly of the diferric tyrosyl radical cofactor of ribonucleotide reductase (RNR), probably by providing electrons for reduction during radical cofactor maturation in the catalytic small subunit RNR2. This is Fe-S cluster assembly protein DRE2 from Uncinocarpus reesii (strain UAMH 1704).